The primary structure comprises 96 residues: uncharacterized protein (96 aa).

The N-terminal stretch at 1-15 is a signal peptide; that stretch reads MRLFILLVALFVICA.

This is an uncharacterized protein from Caenorhabditis elegans.